We begin with the raw amino-acid sequence, 445 residues long: Phosphoglucosamine mutase (445 aa).

The Phosphoserine intermediate role is filled by S102. Residues S102, D240, D242, and D244 each contribute to the Mg(2+) site. S102 carries the post-translational modification Phosphoserine.

The protein belongs to the phosphohexose mutase family. It depends on Mg(2+) as a cofactor. Post-translationally, activated by phosphorylation.

It carries out the reaction alpha-D-glucosamine 1-phosphate = D-glucosamine 6-phosphate. Functionally, catalyzes the conversion of glucosamine-6-phosphate to glucosamine-1-phosphate. This Mycobacterium ulcerans (strain Agy99) protein is Phosphoglucosamine mutase.